The primary structure comprises 342 residues: Fatty acid desaturase 6 (342 aa).

Transmembrane regions (helical) follow at residues 39 to 59 (GVDCAILALSLLALPAGFLCL) and 63 to 83 (NILAFATGITILGVCHYTLTV). Residues 87–91 (HLATH) carry the Histidine box-1 motif. Residues 100–120 (WSKILMIFFLEVCTAFSAEFA) traverse the membrane as a helical segment. Positions 124 to 128 (HVNLH) match the Histidine box-2 motif. A run of 2 helical transmembrane segments spans residues 151 to 171 (YVYMFLGPLLVPIITPLVALE) and 185 to 205 (LGFICLGLYSQYWLFMNVSGF). The Histidine box-3 signature appears at 277–281 (HVEHH).

This sequence belongs to the fatty acid desaturase type 1 family.

Its subcellular location is the membrane. The protein operates within lipid metabolism; fatty acid metabolism. The sequence is that of Fatty acid desaturase 6 (Fads6) from Mus musculus (Mouse).